The following is a 478-amino-acid chain: Glycogen synthase (478 aa).

Lysine 15 provides a ligand contact to ADP-alpha-D-glucose.

It belongs to the glycosyltransferase 1 family. Bacterial/plant glycogen synthase subfamily.

It catalyses the reaction [(1-&gt;4)-alpha-D-glucosyl](n) + ADP-alpha-D-glucose = [(1-&gt;4)-alpha-D-glucosyl](n+1) + ADP + H(+). It functions in the pathway glycan biosynthesis; glycogen biosynthesis. Synthesizes alpha-1,4-glucan chains using ADP-glucose. The sequence is that of Glycogen synthase from Acholeplasma laidlawii (strain PG-8A).